The primary structure comprises 61 residues: uncharacterized protein (61 aa).

The N-terminal stretch at Met-1–Ala-28 is a signal peptide.

This is an uncharacterized protein from Mycobacterium tuberculosis (strain ATCC 25618 / H37Rv).